A 316-amino-acid polypeptide reads, in one-letter code: MSNKLEQLRKLTTVVADTGEIDAIKKYQPEDATTNPSLILKAAQIEEYAPLIDASIEYAKAQSNDKAQQVQDTCDMLAVNIGKEILKTIPGRISTEVDARLSYDTEGSVAKARQLVKMYNDAGITNDRILIKLASTWEGIRAAEILEKEGINCNLTLLFSFAQARACAEAGVFLISPFVGRIMDWYKAKEGRDFEASEDPGVISVTDIYNYYKDYGYNTVVMGASFRNIGEILELAGCDRLTIAPALLAELEAAEGEVVEKLVDSKGSKERPAPMSHAEFLWEHNLDAMAVEKVAEGIRNFAVDQGKLEDMIAAKL.

The active-site Schiff-base intermediate with substrate is the K132.

It belongs to the transaldolase family. Type 1 subfamily. Homodimer.

It localises to the cytoplasm. It catalyses the reaction D-sedoheptulose 7-phosphate + D-glyceraldehyde 3-phosphate = D-erythrose 4-phosphate + beta-D-fructose 6-phosphate. It participates in carbohydrate degradation; pentose phosphate pathway; D-glyceraldehyde 3-phosphate and beta-D-fructose 6-phosphate from D-ribose 5-phosphate and D-xylulose 5-phosphate (non-oxidative stage): step 2/3. Transaldolase is important for the balance of metabolites in the pentose-phosphate pathway. This Vibrio campbellii (strain ATCC BAA-1116) protein is Transaldolase.